The primary structure comprises 184 residues: ATP synthase subunit b, chloroplastic (184 aa).

The chain crosses the membrane as a helical span at residues 29–49; that stretch reads INLINLILVLGILFYYGKGVL.

Belongs to the ATPase B chain family. In terms of assembly, F-type ATPases have 2 components, F(1) - the catalytic core - and F(0) - the membrane proton channel. F(1) has five subunits: alpha(3), beta(3), gamma(1), delta(1), epsilon(1). F(0) has four main subunits: a(1), b(1), b'(1) and c(10-14). The alpha and beta chains form an alternating ring which encloses part of the gamma chain. F(1) is attached to F(0) by a central stalk formed by the gamma and epsilon chains, while a peripheral stalk is formed by the delta, b and b' chains.

The protein resides in the plastid. Its subcellular location is the chloroplast thylakoid membrane. F(1)F(0) ATP synthase produces ATP from ADP in the presence of a proton or sodium gradient. F-type ATPases consist of two structural domains, F(1) containing the extramembraneous catalytic core and F(0) containing the membrane proton channel, linked together by a central stalk and a peripheral stalk. During catalysis, ATP synthesis in the catalytic domain of F(1) is coupled via a rotary mechanism of the central stalk subunits to proton translocation. In terms of biological role, component of the F(0) channel, it forms part of the peripheral stalk, linking F(1) to F(0). The chain is ATP synthase subunit b, chloroplastic from Adiantum capillus-veneris (Maidenhair fern).